A 160-amino-acid chain; its full sequence is MLVSKSNGFNASAVLGSGSYNENKSSKHMELLAHSILKLICKEAASETYRGALETLQKMMSECIYQEGNAFVIMGAGEQLKRIKYEVGENNLKVFNVHFNNNHELVSSGEPDVICLSKQVWENLLIKLKLENNENVFSETKKLSNKNNADQFFECAKRNE.

The protein is Protein YpjC (ypjC) of Escherichia coli (strain K12).